Consider the following 61-residue polypeptide: UPF0370 protein SG1720 (61 aa).

Residues 3-23 (WLADYWWVVLLVLAGMLIGGV) form a helical membrane-spanning segment. Residues 37 to 47 (NRPELPPHRDN) are compositionally biased toward basic and acidic residues. The disordered stretch occupies residues 37 to 61 (NRPELPPHRDNNAQWDEEDDWPKKP). The segment covering 51–61 (WDEEDDWPKKP) has biased composition (acidic residues).

The protein belongs to the UPF0370 family.

The protein resides in the cell membrane. This is UPF0370 protein SG1720 from Sodalis glossinidius (strain morsitans).